A 118-amino-acid polypeptide reads, in one-letter code: Small ribosomal subunit protein uS13 (118 aa).

The tract at residues 93 to 118 is disordered; that stretch reads KKLPVRGQRTKTNARTRKGPRKLMKK.

The protein belongs to the universal ribosomal protein uS13 family. In terms of assembly, part of the 30S ribosomal subunit. Forms a loose heterodimer with protein S19. Forms two bridges to the 50S subunit in the 70S ribosome.

Located at the top of the head of the 30S subunit, it contacts several helices of the 16S rRNA. In the 70S ribosome it contacts the 23S rRNA (bridge B1a) and protein L5 of the 50S subunit (bridge B1b), connecting the 2 subunits; these bridges are implicated in subunit movement. Contacts the tRNAs in the A and P-sites. The protein is Small ribosomal subunit protein uS13 of Buchnera aphidicola subsp. Baizongia pistaciae (strain Bp).